A 309-amino-acid polypeptide reads, in one-letter code: Dicarboxylate carrier UCP2 (309 aa).

Over 1–16 the chain is Mitochondrial intermembrane; sequence MVGFKATDVPPTATVK. Solcar repeat units lie at residues 11–106, 114–203, and 212–297; these read PTAT…VKQF, AGIG…IKDT, and DDLP…LKRA. The tract at residues 16–63 is important for interaction with long-chain fatty acids; it reads KFLGAGTAACIADLITFPLDTAKVRLQIQGESQGLVRTAASAQYRGVL. Residues 17–40 traverse the membrane as a helical segment; that stretch reads FLGAGTAACIADLITFPLDTAKVR. Residues 41–77 lie on the Mitochondrial matrix side of the membrane; it reads LQIQGESQGLVRTAASAQYRGVLGTILTMVRTEGPRS. The helical transmembrane segment at 78–103 threads the bilayer; that stretch reads LYNGLVAGLQRQMSFASVRIGLYDSV. At 104–119 the chain is on the mitochondrial intermembrane side; sequence KQFYTKGSEHAGIGSR. The helical transmembrane segment at 120-145 threads the bilayer; the sequence is LLAGSTTGALAVAVAQPTDVVKVRFQ. Residues 146-173 lie on the Mitochondrial matrix side of the membrane; that stretch reads AQARAGGGRRYQSTVEAYKTIAREEGIR. A helical transmembrane segment spans residues 174–199; sequence GLWKGTSPNVARNAIVNCAELVTYDL. Over 200–217 the chain is Mitochondrial intermembrane; it reads IKDTLLKANLMTDDLPCH. A helical membrane pass occupies residues 218 to 242; the sequence is FTSAFGAGFCTTVIASPVDVVKTRY. Over 243–268 the chain is Mitochondrial matrix; it reads MNSALGQYHSAGHCALTMLRKEGPRA. The helical transmembrane segment at 269–294 threads the bilayer; the sequence is FYKGFMPSFLRLGSWNVVMFVTYEQL. Positions 278 to 285 are important for interaction with long-chain fatty acids; the sequence is LRLGSWNV. The Mitochondrial intermembrane segment spans residues 295–309; sequence KRALMAAYQSREAPF.

This sequence belongs to the mitochondrial carrier (TC 2.A.29) family. Homotetramer. Adopts an asymmetrical dimer of dimers functional form. Interacts with MICU1 (when methylated); leading to decrease the calcium sensitivity of MICU1. Widely expressed. Highest in spleen, lung, white and brown adipose tissues. 4-6 times higher levels are detected in white adipose tissue of ob/ob and db/db mice when compared to lean littermates. Expressed in neurons of the ventromedial nucleus of the hypothalamus (at protein level). Expressed in thymocytes (at protein level).

Its subcellular location is the mitochondrion inner membrane. It carries out the reaction L-aspartate(out) + phosphate(in) + H(+)(in) = L-aspartate(in) + phosphate(out) + H(+)(out). The enzyme catalyses oxaloacetate(out) + phosphate(in) + H(+)(in) = oxaloacetate(in) + phosphate(out) + H(+)(out). It catalyses the reaction (S)-malate(out) + phosphate(in) + H(+)(in) = (S)-malate(in) + phosphate(out) + H(+)(out). The catalysed reaction is malonate(out) + phosphate(in) + H(+)(in) = malonate(in) + phosphate(out) + H(+)(out). It carries out the reaction sulfate(out) + phosphate(in) + H(+)(in) = sulfate(in) + phosphate(out) + H(+)(out). The enzyme catalyses (S)-malate(out) = (S)-malate(in). It catalyses the reaction L-aspartate(out) = L-aspartate(in). The catalysed reaction is phosphate(in) = phosphate(out). It carries out the reaction chloride(in) = chloride(out). The enzyme catalyses H(+)(in) = H(+)(out). It catalyses the reaction a long-chain fatty acid(out) = a long-chain fatty acid(in). Proton conductance is activated by free long-chain fatty acids and allosterically inhibited by purine nucleotides. Could be constitutively inhibited by GDP. Its function is as follows. Antiporter that exports dicarboxylate intermediates of the Krebs cycle in exchange for phosphate plus a proton across the inner membrane of mitochondria, a process driven by mitochondrial motive force with an overall impact on glycolysis, glutaminolysis and glutathione-dependent redox balance. Continuous export of oxaloacetate and related four-carbon dicarboxylates from mitochondrial matrix into the cytosol negatively regulates the oxidation of acetyl-CoA substrates via the Krebs cycle lowering the ATP/ADP ratio and reactive oxygen species (ROS) production. May mediate inducible proton entry into the mitochondrial matrix affecting ATP turnover as a protection mechanism against oxidative stress. The proton currents are most likely associated with fatty acid flipping across the inner membrane of mitochondria in a metabolic process regulated by free fatty acids and purine nucleotides. Regulates the use of glucose as a source of energy. Required for glucose-induced DRP1-dependent mitochondrial fission and neuron activation in the ventromedial nucleus of the hypothalamus (VMH). This mitochondrial adaptation mechanism modulates the VMH pool of glucose-excited neurons with an impact on systemic glucose homeostasis. Regulates ROS levels and metabolic reprogramming of macrophages during the resolution phase of inflammation. Attenuates ROS production in response to IL33 to preserve the integrity of the Krebs cycle required for persistent production of itaconate and subsequent GATA3-dependent differentiation of inflammation-resolving alternatively activated macrophages. Can unidirectionally transport anions including L-malate, L-aspartate, phosphate and chloride ions. Does not mediate adaptive thermogenesis. In Mus musculus (Mouse), this protein is Dicarboxylate carrier UCP2 (Ucp2).